We begin with the raw amino-acid sequence, 151 residues long: Small ribosomal subunit protein uS15 (151 aa).

The disordered stretch occupies residues 1-20 (MARLHSGKRGSSGSTRPLRT).

Belongs to the universal ribosomal protein uS15 family. In terms of assembly, part of the 30S ribosomal subunit.

This is Small ribosomal subunit protein uS15 from Methanococcus aeolicus (strain ATCC BAA-1280 / DSM 17508 / OCM 812 / Nankai-3).